Reading from the N-terminus, the 494-residue chain is Ribose import ATP-binding protein RbsA (494 aa).

ABC transporter domains are found at residues 2 to 239 and 251 to 493; these read IDMR…VGRQ and IGEE…TGGN. 34 to 41 is a binding site for ATP; sequence GENGAGKS.

The protein belongs to the ABC transporter superfamily. Ribose importer (TC 3.A.1.2.1) family. As to quaternary structure, the complex is composed of an ATP-binding protein (RbsA), two transmembrane proteins (RbsC) and a solute-binding protein (RbsB).

The protein resides in the cell membrane. It carries out the reaction D-ribose(out) + ATP + H2O = D-ribose(in) + ADP + phosphate + H(+). Functionally, part of the ABC transporter complex RbsABC involved in ribose import. Responsible for energy coupling to the transport system. This chain is Ribose import ATP-binding protein RbsA, found in Geobacillus kaustophilus (strain HTA426).